The chain runs to 128 residues: UPF0325 protein NT01EI_0832 (128 aa).

It belongs to the UPF0325 family.

The sequence is that of UPF0325 protein NT01EI_0832 from Edwardsiella ictaluri (strain 93-146).